The following is a 176-amino-acid chain: RNA pyrophosphohydrolase (176 aa).

Residues 8–159 (PYRTCVGMML…KRPVYERVVK (152 aa)) form the Nudix hydrolase domain. Positions 47-68 (GGVDPGEDTWAAAKRELYEETS) match the Nudix box motif.

It belongs to the Nudix hydrolase family. RppH subfamily. A divalent metal cation is required as a cofactor.

In terms of biological role, accelerates the degradation of transcripts by removing pyrophosphate from the 5'-end of triphosphorylated RNA, leading to a more labile monophosphorylated state that can stimulate subsequent ribonuclease cleavage. The sequence is that of RNA pyrophosphohydrolase from Rhodopseudomonas palustris (strain BisA53).